Consider the following 65-residue polypeptide: Large ribosomal subunit protein bL35 (65 aa).

Basic residues predominate over residues 1–11 (MPKIKTRRSAA). Disordered stretches follow at residues 1 to 24 (MPKI…KFKR) and 41 to 65 (RMRL…MPYA).

It belongs to the bacterial ribosomal protein bL35 family.

The protein is Large ribosomal subunit protein bL35 of Nitratidesulfovibrio vulgaris (strain DSM 19637 / Miyazaki F) (Desulfovibrio vulgaris).